A 416-amino-acid polypeptide reads, in one-letter code: Nuclear hormone receptor family member nhr-59 (416 aa).

The segment at residues 17-94 (QTFCQVCGQE…IGMDIQNFQF (78 aa)) is a DNA-binding region (nuclear receptor). NR C4-type zinc fingers lie at residues 20 to 40 (CQVC…CRAC) and 57 to 82 (CKDG…LKKC). One can recognise an NR LBD domain in the interval 162-415 (TRLQKLSSSL…FSHPELVKDV (254 aa)).

It belongs to the nuclear hormone receptor family.

It localises to the nucleus. Orphan nuclear receptor. This is Nuclear hormone receptor family member nhr-59 from Caenorhabditis elegans.